A 175-amino-acid polypeptide reads, in one-letter code: Endoribonuclease YbeY (175 aa).

The Zn(2+) site is built by H129, H133, and H139.

Belongs to the endoribonuclease YbeY family. Zn(2+) is required as a cofactor.

The protein resides in the cytoplasm. In terms of biological role, single strand-specific metallo-endoribonuclease involved in late-stage 70S ribosome quality control and in maturation of the 3' terminus of the 16S rRNA. The protein is Endoribonuclease YbeY of Lactobacillus gasseri (strain ATCC 33323 / DSM 20243 / BCRC 14619 / CIP 102991 / JCM 1131 / KCTC 3163 / NCIMB 11718 / NCTC 13722 / AM63).